The sequence spans 909 residues: Ribosome-releasing factor 2, mitochondrial (909 aa).

The transit peptide at 1-15 (MVAAPLLRAHQAARL) directs the protein to the mitochondrion. The tr-type G domain occupies 57 to 367 (DRTRNIGIIA…AVTNLLPSPP (311 aa)). 66-73 (AHIDAGKT) is a binding site for GTP. Positions 121–148 (WPPQTAGDGNTTPQEPQTPRSASSHTVN) are disordered. The segment covering 127-148 (GDGNTTPQEPQTPRSASSHTVN) has biased composition (polar residues). Residues 151 to 155 (DTPGH) and 205 to 208 (NKLD) contribute to the GTP site.

This sequence belongs to the TRAFAC class translation factor GTPase superfamily. Classic translation factor GTPase family. EF-G/EF-2 subfamily.

It is found in the mitochondrion. In terms of biological role, mitochondrial GTPase that mediates the disassembly of ribosomes from messenger RNA at the termination of mitochondrial protein biosynthesis. Not involved in the GTP-dependent ribosomal translocation step during translation elongation. The protein is Ribosome-releasing factor 2, mitochondrial (mef2) of Aspergillus flavus (strain ATCC 200026 / FGSC A1120 / IAM 13836 / NRRL 3357 / JCM 12722 / SRRC 167).